Here is a 487-residue protein sequence, read N- to C-terminus: N-succinylglutamate 5-semialdehyde dehydrogenase (487 aa).

An NAD(+)-binding site is contributed by 221-226; that stretch reads GSSRTG. Active-site residues include Glu244 and Cys278.

The protein belongs to the aldehyde dehydrogenase family. AstD subfamily.

The enzyme catalyses N-succinyl-L-glutamate 5-semialdehyde + NAD(+) + H2O = N-succinyl-L-glutamate + NADH + 2 H(+). It participates in amino-acid degradation; L-arginine degradation via AST pathway; L-glutamate and succinate from L-arginine: step 4/5. Functionally, catalyzes the NAD-dependent reduction of succinylglutamate semialdehyde into succinylglutamate. This is N-succinylglutamate 5-semialdehyde dehydrogenase from Pseudomonas entomophila (strain L48).